Here is a 130-residue protein sequence, read N- to C-terminus: Small ribosomal subunit protein uS9 (130 aa).

This sequence belongs to the universal ribosomal protein uS9 family.

The sequence is that of Small ribosomal subunit protein uS9 from Streptococcus equi subsp. equi (strain 4047).